The sequence spans 458 residues: Serine/threonine-protein kinase tricornered (458 aa).

A Protein kinase domain is found at phenylalanine 92–phenylalanine 389. Residues isoleucine 98 to valine 106 and lysine 121 contribute to the ATP site. The interaction with mats and Mob1 stretch occupies residues tyrosine 118–threonine 179. Aspartate 215 (proton acceptor) is an active-site residue. Serine 287 carries the post-translational modification Phosphoserine. Residues arginine 390–glutamate 458 enclose the AGC-kinase C-terminal domain. Threonine 448 carries the phosphothreonine modification.

This sequence belongs to the protein kinase superfamily. AGC Ser/Thr protein kinase family. Interacts with, and is activated by, Mob1. Mg(2+) serves as cofactor.

Its subcellular location is the cytoplasm. The protein resides in the nucleus. The enzyme catalyses L-seryl-[protein] + ATP = O-phospho-L-seryl-[protein] + ADP + H(+). It catalyses the reaction L-threonyl-[protein] + ATP = O-phospho-L-threonyl-[protein] + ADP + H(+). Functionally, serine/threonine-protein kinase involved in controlling cell structure and proliferation of a variety of polarized outgrowths including epidermal hairs, bristles, arista laterals, and dendrites. Together with fry, maintains the integrity of epidermal hairs and is an essential component of the signaling pathway regulating dendritic branching of sensory neurons. Reduces neurite outgrowth by phosphorylating pav/pavarotti, thereby inhibiting its function in microtubule-microtubule sliding. The polypeptide is Serine/threonine-protein kinase tricornered (Drosophila pseudoobscura pseudoobscura (Fruit fly)).